Reading from the N-terminus, the 91-residue chain is Small ribosomal subunit protein uS19 (91 aa).

Belongs to the universal ribosomal protein uS19 family.

Functionally, protein S19 forms a complex with S13 that binds strongly to the 16S ribosomal RNA. This is Small ribosomal subunit protein uS19 from Laribacter hongkongensis (strain HLHK9).